Here is a 253-residue protein sequence, read N- to C-terminus: 5'-nucleotidase SurE (253 aa).

Asp-8, Asp-9, Ser-39, and Asn-92 together coordinate a divalent metal cation.

It belongs to the SurE nucleotidase family. Requires a divalent metal cation as cofactor.

Its subcellular location is the cytoplasm. The catalysed reaction is a ribonucleoside 5'-phosphate + H2O = a ribonucleoside + phosphate. Functionally, nucleotidase that shows phosphatase activity on nucleoside 5'-monophosphates. This chain is 5'-nucleotidase SurE, found in Burkholderia thailandensis (strain ATCC 700388 / DSM 13276 / CCUG 48851 / CIP 106301 / E264).